The following is a 90-amino-acid chain: Probable Fe(2+)-trafficking protein (90 aa).

The protein belongs to the Fe(2+)-trafficking protein family.

Its function is as follows. Could be a mediator in iron transactions between iron acquisition and iron-requiring processes, such as synthesis and/or repair of Fe-S clusters in biosynthetic enzymes. The protein is Probable Fe(2+)-trafficking protein of Chromohalobacter salexigens (strain ATCC BAA-138 / DSM 3043 / CIP 106854 / NCIMB 13768 / 1H11).